Consider the following 1035-residue polypeptide: Calcium-transporting ATPase 7, plasma membrane-type (1035 aa).

Residues 1 to 166 (MECADYFIGS…KGFFRHVWDA (166 aa)) lie on the Cytoplasmic side of the membrane. The helical transmembrane segment at 167-187 (LADVFLIVLLVCAAVSLAFGI) threads the bilayer. Residues 188–194 (KEHGIKD) are Extracellular-facing. Residues 195-215 (GWYDGVSIFLAVFLVAAVSAV) traverse the membrane as a helical segment. Over 216–348 (SNHSQGKRFD…DPTPLQERLE (133 aa)) the chain is Cytoplasmic. A helical membrane pass occupies residues 349–369 (GLTSSIGKVGIAVAVLVFAVL). The Extracellular segment spans residues 370 to 395 (TARHFTGSTRDEQGNALFDKRNVTFN). Asn391 is a glycosylation site (N-linked (GlcNAc...) asparagine). The chain crosses the membrane as a helical span at residues 396-416 (AVFSGLVGIFQQAVTIIVVAI). Topologically, residues 417–818 (PEGLPLAVTL…GRCVYNNIQK (402 aa)) are cytoplasmic. Catalysis depends on Asp460, which acts as the 4-aspartylphosphate intermediate. Residues Asp761 and Asp765 each contribute to the Mg(2+) site. Residues 819 to 839 (FIQFQLTVNVAALVINFVSAV) traverse the membrane as a helical segment. At 840 to 845 (TTGRMP) the chain is on the extracellular side. A helical membrane pass occupies residues 846–866 (LTTVQLLWVNLIMDTMGALAL). Residues 867-887 (ATDTPTAGLMRRPPIGRAAPL) are Cytoplasmic-facing. Residues 888-910 (ISNAMWRNLAAQAAYQVAVLLAL) form a helical membrane-spanning segment. At 911–919 (QYRGFGGAG) the chain is on the extracellular side. A helical transmembrane segment spans residues 920–940 (AGERANGTMIFNAFVLCQVFN). The Cytoplasmic segment spans residues 941–960 (EFNAREIERRNVFAGVHRNR). A helical transmembrane segment spans residues 961-981 (MFLGIVAVTVALQVVMVELLT). Residues 982–990 (KFAGTERLG) lie on the Extracellular side of the membrane. Residues 991–1011 (WGQWGACVGIAAVSWPIGWAV) form a helical membrane-spanning segment. Residues 1012–1035 (KCIPVPERPFHEIITARRRRRRST) lie on the Cytoplasmic side of the membrane.

The protein belongs to the cation transport ATPase (P-type) (TC 3.A.3) family. Type IIB subfamily.

The protein resides in the golgi apparatus membrane. The catalysed reaction is Ca(2+)(in) + ATP + H2O = Ca(2+)(out) + ADP + phosphate + H(+). Its activity is regulated as follows. Activated by calmodulin. In terms of biological role, this magnesium-dependent enzyme catalyzes the hydrolysis of ATP coupled with the translocation of calcium from the cytosol out of the cell, into the endoplasmic reticulum, or into organelles. Involved in salt stress tolerance. This Oryza sativa subsp. japonica (Rice) protein is Calcium-transporting ATPase 7, plasma membrane-type.